The primary structure comprises 397 residues: Cysteine desulfurase IscS (397 aa).

Pyridoxal 5'-phosphate-binding positions include glycine 72–serine 73, asparagine 152, glutamine 180, and serine 200–histidine 202. Lysine 203 carries the N6-(pyridoxal phosphate)lysine modification. Residue threonine 238 participates in pyridoxal 5'-phosphate binding. Cysteine 328 (cysteine persulfide intermediate) is an active-site residue. Position 328 (cysteine 328) interacts with [2Fe-2S] cluster.

It belongs to the class-V pyridoxal-phosphate-dependent aminotransferase family. NifS/IscS subfamily. As to quaternary structure, homodimer. Forms a heterotetramer with IscU, interacts with other sulfur acceptors. Pyridoxal 5'-phosphate is required as a cofactor.

Its subcellular location is the cytoplasm. The catalysed reaction is (sulfur carrier)-H + L-cysteine = (sulfur carrier)-SH + L-alanine. The protein operates within cofactor biosynthesis; iron-sulfur cluster biosynthesis. Functionally, master enzyme that delivers sulfur to a number of partners involved in Fe-S cluster assembly, tRNA modification or cofactor biosynthesis. Catalyzes the removal of elemental sulfur atoms from cysteine to produce alanine. Functions as a sulfur delivery protein for Fe-S cluster synthesis onto IscU, an Fe-S scaffold assembly protein, as well as other S acceptor proteins. This Clostridium botulinum (strain ATCC 19397 / Type A) protein is Cysteine desulfurase IscS.